Consider the following 463-residue polypeptide: MLSRATRTAAAKSLVKSKVARNVMAASFVKRHASTSLFKQANKVESLGSIYLSGKKISVAANPFSITSNRFKSTSIEVPPMAESLTEGSLKEYTKNVGDFIKEDELLATIETDKIDIEVNSPVSGTVTKLNFKPEDTVTVGEELAQVEPGEAPAEGSGESKPEPTEQAEPSQGVAARENSSEETASKKEAAPKKEAAPKKEVTEPKKADQPKKTVSKAQEPPVASNSFTPFPRTETRVKMNRMRLRIAERLKESQNTAASLTTFNEVDMSALMEMRKLYKDEIIKKTGTKFGFMGLFSKACTLAAKDIPAVNGAIEGDQIVYRDYTDISVAVATPKGLVTPVVRNAESLSVLDIENEIVRLSHKARDGKLTLEDMTGGTFTISNGGVFGSLYGTPIINSPQTAVLGLHGVKERPVTVNGQIVSRPMMYLALTYDHRLLDGREAVTFLKTVKELIEDPRKMLLW.

The region spanning 73–148 (STSIEVPPMA…TVGEELAQVE (76 aa)) is the Lipoyl-binding domain. Residue K114 is modified to N6-lipoyllysine. The tract at residues 144–237 (LAQVEPGEAP…FTPFPRTETR (94 aa)) is disordered. Positions 148 to 157 (EPGEAPAEGS) are enriched in low complexity. Residues 184–212 (TASKKEAAPKKEAAPKKEVTEPKKADQPK) are compositionally biased toward basic and acidic residues. A run of 3 repeats spans residues 185-190 (ASKKEA), 191-196 (APKKEA), and 197-202 (APKKEV). The tract at residues 185–209 (ASKKEAAPKKEAAPKKEVTEPKKAD) is 4 X 6 AA approximate tandem repeats of A-[SP]-K-K-E-[AV]. Residues 204–209 (EPKKAD) form a 4; approximate repeat. T340 carries the phosphothreonine modification. Active-site residues include H435 and D439.

It belongs to the 2-oxoacid dehydrogenase family. In terms of assembly, component of the 2-oxoglutarate dehydrogenase complex (OGDC), also called alpha-ketoglutarate dehydrogenase (KGDH) complex. The copmplex is composed of the catalytic subunits OGDH (2-oxoglutarate dehydrogenase KGD1; also called E1 subunit), DLST (dihydrolipoamide succinyltransferase KGD2; also called E2 subunit) and DLD (dihydrolipoamide dehydrogenase LPD1; also called E3 subunit), and the assembly factor KGD4. Requires (R)-lipoate as cofactor.

Its subcellular location is the mitochondrion. The catalysed reaction is N(6)-[(R)-dihydrolipoyl]-L-lysyl-[protein] + succinyl-CoA = N(6)-[(R)-S(8)-succinyldihydrolipoyl]-L-lysyl-[protein] + CoA. It functions in the pathway amino-acid degradation; L-lysine degradation via saccharopine pathway; glutaryl-CoA from L-lysine: step 6/6. In terms of biological role, the 2-oxoglutarate dehydrogenase complex catalyzes the overall conversion of 2-oxoglutarate to succinyl-CoA and CO(2). It contains multiple copies of three enzymatic components: 2-oxoglutarate dehydrogenase (E1), dihydrolipoamide succinyltransferase (E2) and lipoamide dehydrogenase (E3). The polypeptide is Dihydrolipoyllysine-residue succinyltransferase component of 2-oxoglutarate dehydrogenase complex, mitochondrial (KGD2) (Saccharomyces cerevisiae (strain ATCC 204508 / S288c) (Baker's yeast)).